The following is a 440-amino-acid chain: Xaa-Pro dipeptidase (440 aa).

Residues Asp246, Asp257, His337, Glu382, and Glu421 each coordinate Mn(2+).

Belongs to the peptidase M24B family. Bacterial-type prolidase subfamily. The cofactor is Mn(2+).

The enzyme catalyses Xaa-L-Pro dipeptide + H2O = an L-alpha-amino acid + L-proline. Functionally, splits dipeptides with a prolyl residue in the C-terminal position. The polypeptide is Xaa-Pro dipeptidase (Aeromonas hydrophila subsp. hydrophila (strain ATCC 7966 / DSM 30187 / BCRC 13018 / CCUG 14551 / JCM 1027 / KCTC 2358 / NCIMB 9240 / NCTC 8049)).